Consider the following 321-residue polypeptide: Olfactory receptor 51G1 (321 aa).

Residues 1–27 (MTILLNSSLQRATFFLTGFQGLEGLHG) lie on the Extracellular side of the membrane. Asn6 carries an N-linked (GlcNAc...) asparagine glycan. Residues 28-48 (WISIPFCFIYLTVILGNLTIL) traverse the membrane as a helical segment. At 49 to 56 (HVICTDAT) the chain is on the cytoplasmic side. The helical transmembrane segment at 57 to 77 (LHGPMYYFLGMLAVTDLGLCL) threads the bilayer. At 78–101 (STLPTVLGIFWFDTREIGIPACFT) the chain is on the extracellular side. A disulfide bridge connects residues Cys99 and Cys191. A helical transmembrane segment spans residues 102 to 122 (QLFFIHTLSSMESSVLLSMSI). The Cytoplasmic segment spans residues 123–141 (DRYVAVCNPLHDSTVLTPA). The chain crosses the membrane as a helical span at residues 142–162 (CIVKMGLSSVLRSALLILPLP). Residues 163–198 (FLLKRFQYCHSHVLAHAYCLHLEIMKLACSSIIVNH) lie on the Extracellular side of the membrane. The chain crosses the membrane as a helical span at residues 199 to 219 (IYGLFVVACTVGVDSLLIFLS). Topologically, residues 220–239 (YALILRTVLSIASHQERLRA) are cytoplasmic. Residues 240–260 (LNTCVSHICAVLLFYIPMIGL) form a helical membrane-spanning segment. Over 261-275 (SLVHRFGEHLPRVVH) the chain is Extracellular. A helical transmembrane segment spans residues 276-296 (LFMSYVYLLVPPLMNPIIYSI). The Cytoplasmic portion of the chain corresponds to 297–321 (KTKQIRQRIIKKFQFIKSLRCFWKD).

The protein belongs to the G-protein coupled receptor 1 family.

It localises to the cell membrane. Functionally, odorant receptor. The polypeptide is Olfactory receptor 51G1 (OR51G1) (Homo sapiens (Human)).